Consider the following 377-residue polypeptide: cAMP-dependent protein kinase type II regulatory subunit (377 aa).

Polar residues predominate over residues 48 to 69 (ERPSVSHTDQSTDDQLSVNSQD). The segment at 48 to 78 (ERPSVSHTDQSTDDQLSVNSQDADAEPPVMA) is disordered. S51, S58, S64, S67, and S84 each carry phosphoserine. Positions 81–85 (RRKSV) match the Pseudophosphorylation motif motif. Y90 is subject to Phosphotyrosine. 3',5'-cyclic AMP contacts are provided by residues 124–239 (LFRS…LLNS), E189, R198, 242–362 (MLKA…YESQ), E311, and R320.

This sequence belongs to the cAMP-dependent kinase regulatory chain family. Tetramer, composed of 2 regulatory (R) and 2 catalytic (C) subunits. In the presence of cAMP it dissociates into 2 active monomeric C subunits and an R dimer. Interacts with Akap200. The pseudophosphorylation site binds to the substrate-binding region of the catalytic chain but is not phosphorylated. The physiological significance of phosphorylations by other kinases is unclear. In terms of tissue distribution, detected in follicle cells, germline-derived cells, germline line stem cells and outer rim of ring canals of nurse cells throughout oogenesis (at protein level).

The protein localises to the cytoplasm. It localises to the cell membrane. In terms of biological role, regulatory subunit of the cAMP-dependent protein kinases involved in cAMP signaling in cells. Mediates membrane association by binding to anchoring proteins, such as Akap200. Might play an essential role in the regulation of neuronal activity in the brain. The protein is cAMP-dependent protein kinase type II regulatory subunit (Pka-R2) of Drosophila melanogaster (Fruit fly).